We begin with the raw amino-acid sequence, 568 residues long: MARFAVIGLTFLLLLGTSLSARSDEETRERFYGNVVNSTAPGNGEGSIAKMFDRVLEKEFSENDSPEGSDGASFNSSVADQQAEIETVAKVTHEKGKRNDTQENNGTRPFQLQDVFSLENEDSDDMTLIDKKNNVFVMSNKKSKYPILQVDLRLISDLVVIIVFAAIGGIVFSCLGQPVIVGYLLAGSIIGPGGLKFISEMVQVETVAQFGVVFLLFALGLEFSMTKLKVVGPVAVLGGLLQIVLLMFLCGVTALLCGARLSEGIFVGAFLSMSSTAVVVKFLVERNSTSSLHGQVTIGILIFQDCVVGLLFALLPVLGGNSGLLQGIISMGKLLLILSIYLTVASLLTWSFVPRFLKLMIQLSSQTNELYQLAAVAFCLLSAWCSDKLGLSLELGSFVAGVMLSTTEFAQHTLEQVEPIRNLFAALFLSSIGMLINVHFLWNHVDILLASVILVIVIKTAIAAVVVKAFRYNMRISFHVGVLLAQIGEFAFVLLSRASNLHVIEGKMYLLLLGTTALSLVTTPLLFKLIPSAMNLGVLLRWFPSENSSPNESLQEKASLIEVHNRTK.

Positions 1–20 (MARFAVIGLTFLLLLGTSLS) are cleaved as a signal peptide. A disordered region spans residues 59 to 78 (EFSENDSPEGSDGASFNSSV). Helical transmembrane passes span 154-174 (LISD…VFSC), 178-198 (PVIV…LKFI), 201-221 (MVQV…ALGL), 230-250 (VVGP…MFLC), 264-284 (GIFV…KFLV), 298-318 (IGIL…LPVL), 334-354 (LLLI…SFVP), 389-409 (LGLS…TTEF), 422-442 (NLFA…HFLW), 447-467 (ILLA…AVVV), 476-496 (ISFH…VLLS), and 510-530 (LLLL…FKLI).

Belongs to the monovalent cation:proton antiporter 2 (CPA2) transporter (TC 2.A.37) family. KEA (TC 2.A.37.1) subfamily. In terms of tissue distribution, expressed in roots, stems, leaves, flowers and silique.

Its subcellular location is the golgi apparatus membrane. The protein localises to the golgi apparatus. The protein resides in the trans-Golgi network membrane. It localises to the prevacuolar compartment membrane. It is found in the endomembrane system. The enzyme catalyses K(+)(in) + H(+)(out) = K(+)(out) + H(+)(in). Its function is as follows. Electroneutral K(+)/H(+) efflux antiporter involved in K(+) homeostasis and osmotic adjustment. Together with KEA4 and KEA6, promotes growth and development, and facilitates endosomal pH and ions homeostasis, as well as salt tolerance (e.g. K(+), NaCl and LiCl), probably by supporting cell wall biosynthesis during rapid etiolated seedling growth. The protein is K(+) efflux antiporter 5 of Arabidopsis thaliana (Mouse-ear cress).